Here is a 315-residue protein sequence, read N- to C-terminus: Tyrosine recombinase XerC (315 aa).

The region spanning 13–104 (ADLAAAREEW…GVRSLLRHLE (92 aa)) is the Core-binding (CB) domain. The Tyr recombinase domain occupies 125–309 (SLPKPLTADD…DTQRLLEVYD (185 aa)). Residues arginine 168, lysine 193, histidine 261, arginine 264, and histidine 287 contribute to the active site. Tyrosine 296 functions as the O-(3'-phospho-DNA)-tyrosine intermediate in the catalytic mechanism.

It belongs to the 'phage' integrase family. XerC subfamily. In terms of assembly, forms a cyclic heterotetrameric complex composed of two molecules of XerC and two molecules of XerD.

The protein localises to the cytoplasm. In terms of biological role, site-specific tyrosine recombinase, which acts by catalyzing the cutting and rejoining of the recombining DNA molecules. The XerC-XerD complex is essential to convert dimers of the bacterial chromosome into monomers to permit their segregation at cell division. It also contributes to the segregational stability of plasmids. The polypeptide is Tyrosine recombinase XerC (Brucella suis biovar 1 (strain 1330)).